Reading from the N-terminus, the 128-residue chain is Glycine cleavage system H protein (128 aa).

Residues 23–105 (IGIVGITWFA…YGEGWILKLE (83 aa)) enclose the Lipoyl-binding domain. N6-lipoyllysine is present on K64.

It belongs to the GcvH family. The glycine cleavage system is composed of four proteins: P, T, L and H. The cofactor is (R)-lipoate.

Functionally, the glycine cleavage system catalyzes the degradation of glycine. The H protein shuttles the methylamine group of glycine from the P protein to the T protein. The polypeptide is Glycine cleavage system H protein (Symbiobacterium thermophilum (strain DSM 24528 / JCM 14929 / IAM 14863 / T)).